We begin with the raw amino-acid sequence, 379 residues long: Cytochrome bd-I ubiquinol oxidase subunit 2 (379 aa).

Met1 is subject to N-formylmethionine. The Cytoplasmic segment spans residues 1–8; that stretch reads MIDYEVLR. A helical membrane pass occupies residues 9-28; the sequence is FIWWLLVGVLLIGFAVTDGF. Residues 29 to 79 are Periplasmic-facing; it reads DMGVGMLTRFLGRNDTERRIMINSIAPHWDGNQVWLITAGGALFAAWPMVY. A helical transmembrane segment spans residues 80-99; that stretch reads AAAFSGFYVAMILVLASLFF. The Cytoplasmic portion of the chain corresponds to 100-122; the sequence is RPVGFDYRSKIEETRWRNMWDWG. A helical membrane pass occupies residues 123–142; sequence IFIGSFVPPLVIGVAFGNLL. The Periplasmic segment spans residues 143–164; sequence QGVPFNVDEYLRLYYTGNFFQL. The chain crosses the membrane as a helical span at residues 165-184; sequence LNPFGLLAGVVSVGMIITQG. Residues 185–205 lie on the Cytoplasmic side of the membrane; that stretch reads ATYLQMRTVGELHLRTRATAQ. A helical membrane pass occupies residues 206 to 225; sequence VAALVTLVCFALAGVWVMYG. Residues 226–262 lie on the Periplasmic side of the membrane; that stretch reads IDGYVVKSTMDHYAASNPLNKEVVREAGAWLVNFNNT. A helical transmembrane segment spans residues 263–282; that stretch reads PILWAIPALGVVLPLLTILT. Residues 283–292 lie on the Cytoplasmic side of the membrane; it reads ARMDKAAWAF. The chain crosses the membrane as a helical span at residues 293–312; that stretch reads VFSSLTLACIILTAGIAMFP. At 313 to 336 the chain is on the periplasmic side; sequence FVMPSSTMMNASLTMWDATSSQLT. Residues 337 to 356 form a helical membrane-spanning segment; sequence LNVMTWVAVVLVPIILLYTA. Residues 357-379 are Cytoplasmic-facing; the sequence is WCYWKMFGRITKEDIERNTHSLY.

The protein belongs to the cytochrome ubiquinol oxidase subunit 2 family. As to quaternary structure, heterodimer of subunits I and II. The cofactor is heme b. Heme d cis-diol is required as a cofactor.

It is found in the cell inner membrane. It catalyses the reaction 2 a ubiquinol + O2(in) + 4 H(+)(in) = 2 a ubiquinone + 2 H2O(in) + 4 H(+)(out). Its pathway is energy metabolism; oxidative phosphorylation. In terms of biological role, a terminal oxidase that produces a proton motive force by the vectorial transfer of protons across the inner membrane. It is the component of the aerobic respiratory chain of E.coli that predominates when cells are grown at low aeration. Generates a proton motive force using protons and electrons from opposite sides of the membrane to generate H(2)O, transferring 1 proton/electron. This chain is Cytochrome bd-I ubiquinol oxidase subunit 2 (cydB), found in Escherichia coli O157:H7.